Reading from the N-terminus, the 189-residue chain is Interferon alpha-H (189 aa).

The first 23 residues, 1–23, serve as a signal peptide directing secretion; it reads MAPAWSFLLALLLLSCNAICSLG. Intrachain disulfides connect cysteine 24–cysteine 122 and cysteine 52–cysteine 162.

This sequence belongs to the alpha/beta interferon family.

Its subcellular location is the secreted. In terms of biological role, produced by macrophages, IFN-alpha have antiviral activities. Interferon stimulates the production of two enzymes: a protein kinase and an oligoadenylate synthetase. The polypeptide is Interferon alpha-H (IFNAH) (Bos taurus (Bovine)).